The following is a 732-amino-acid chain: Serine/threonine-protein kinase CBK1 (732 aa).

Residues 111 to 240 (SFDNHLNVDP…STEAANSDMT (130 aa)) form a disordered region. The segment covering 119–159 (DPNNTERFTSMDSMNFQPPASTFTQLGNGSSTNLSEISSGQ) has biased composition (polar residues). Residues 160–171 (NSLLSNHSVNNL) show a composition bias toward low complexity. Residues 172-183 (PTALTSDTSPPV) are compositionally biased toward polar residues. The span at 185-221 (QHPQFQPQQQQQQQQPQQQQIFQQQQQQQQQQQQPQQ) shows a compositional bias: low complexity. The segment covering 222 to 240 (SRAVVNQSVSTEAANSDMT) has biased composition (polar residues). The stretch at 281 to 310 (HAIERNQRRLELENKIANEDIGSSEERKNR) forms a coiled coil. Residues 335–647 (FHTVKVIGKG…AEEIKQHPFF (313 aa)) enclose the Protein kinase domain. Residues 341 to 349 (IGKGAFGEV) and Lys364 each bind ATP. Asp458 serves as the catalytic Proton acceptor. The region spanning 648 to 730 (RGVDWDSIRD…SRFDYLTRKN (83 aa)) is the AGC-kinase C-terminal domain.

The protein belongs to the protein kinase superfamily. STE Ser/Thr protein kinase family. COT1 subfamily. As to quaternary structure, interacts with MOB2 and BCR1.

Its subcellular location is the bud neck. It localises to the cell tip. The catalysed reaction is L-seryl-[protein] + ATP = O-phospho-L-seryl-[protein] + ADP + H(+). The enzyme catalyses L-threonyl-[protein] + ATP = O-phospho-L-threonyl-[protein] + ADP + H(+). In terms of biological role, serine/threonine-protein kinase required for wild-type hyphal growth and transcriptional regulation of cell-wall-associated genes. Involved in the biofilm formation through phosphorylation of the master regulator of biofilm formation BCR1. The sequence is that of Serine/threonine-protein kinase CBK1 (CBK1) from Candida albicans (strain SC5314 / ATCC MYA-2876) (Yeast).